The following is a 366-amino-acid chain: Probable S-adenosyl-L-methionine-binding protein AF_0433 (366 aa).

A TsaA-like domain is found at 6 to 136 (LRQVGVIRSP…YSSTIDSVGN (131 aa)). S-adenosyl-L-methionine-binding positions include 23–25 (PHQ), 61–62 (DR), Arg85, and 116–119 (LDGT).

It belongs to the tRNA methyltransferase O family.

The chain is Probable S-adenosyl-L-methionine-binding protein AF_0433 from Archaeoglobus fulgidus (strain ATCC 49558 / DSM 4304 / JCM 9628 / NBRC 100126 / VC-16).